The sequence spans 412 residues: Serine hydroxymethyltransferase (412 aa).

Residues Leu117 and 121 to 123 (GHL) contribute to the (6S)-5,6,7,8-tetrahydrofolate site. Residue Lys226 is modified to N6-(pyridoxal phosphate)lysine. 349-351 (SPF) lines the (6S)-5,6,7,8-tetrahydrofolate pocket.

Belongs to the SHMT family. As to quaternary structure, homodimer. Pyridoxal 5'-phosphate serves as cofactor.

Its subcellular location is the cytoplasm. The catalysed reaction is (6R)-5,10-methylene-5,6,7,8-tetrahydrofolate + glycine + H2O = (6S)-5,6,7,8-tetrahydrofolate + L-serine. Its pathway is one-carbon metabolism; tetrahydrofolate interconversion. The protein operates within amino-acid biosynthesis; glycine biosynthesis; glycine from L-serine: step 1/1. Catalyzes the reversible interconversion of serine and glycine with tetrahydrofolate (THF) serving as the one-carbon carrier. This reaction serves as the major source of one-carbon groups required for the biosynthesis of purines, thymidylate, methionine, and other important biomolecules. Also exhibits THF-independent aldolase activity toward beta-hydroxyamino acids, producing glycine and aldehydes, via a retro-aldol mechanism. The polypeptide is Serine hydroxymethyltransferase (Nitratidesulfovibrio vulgaris (strain DSM 19637 / Miyazaki F) (Desulfovibrio vulgaris)).